The following is a 1076-amino-acid chain: MAAEKLRDLSQPIDVVLLDATVEAFYSTGSKEERASADNILRDLKANPDTWLQVVHILQNTSSTHTKFFALQVLEGVIKYRWNALPVEQRDGMKNYISDVIVQLSRDEASFRTERLYVNKLNIILVQIVKQEWPAKWKSFIPDLVIAAKTSETICENCMAILKLLSEEVFDFSKGEMTQQKIKELKQSLNSEFQLIHELCLYVLSASQRQELIRATLSALHAYLSWIPLGYIFESPLLEILLKFFPVPAYRNLTLQCLSEVASLNFGDFYDMQYVKMYSIFMNQLQAILPLNLNIPEAYSTGSSEEQAFIQNLALFFTSFFKLHIKILESAPENISLLLAGLGYLISISYVDDTEVFKVCLDYWNSLVLELFGTRHHACHPALTPSLFGLQMAFLPSTVDGVKSEVTERQKLYSDPMSKLRGLMISRTAKPEEVLIVEDENGNIVRETMKDNDVLVQYKIMRETLIYLSHLDHEDTEKQMLSKLSKQLSGEEWAWNNLNTLCWAIGSISGSMVVEQENRFLVMVIRDLLSLCEVVKGKDNKAVIASNIMYVVGQYSRFLRAHWKFLKTVVHKLFEFMHETHPGVQDMACDTFLKIVQKCKRKFVIVQVGESEPFVSELLSGLATIVGDLQPHQIHTFYESVGSMIQAESDPQKRGEYLQRLMALPNQKWAEIIGQARQSADILKEPDVIRTVLNILQTNTRVATSLGTFFLSQISLIFLDMLNVYRMYSELVSSSIANGGPYASRTSLVKLLRSVKREILKLIETFLDKAENQPHIGKQFVPPMMDQVLGDYARNVPDARESEVLSLFATIINKYKVVMRDEVPLIFEAVFQCTLEMITKNFEDYPEHRLKFFSLLRAIATFCFRALIQLSSEQLKLVMDSVIWAFRHTERNIAETGLNLLLEMLKNFQKSDFCNKFYQTYFLQIEQEVFAVLTDTFHKPGFKLHVLVLQHLFSLVESGSLAEPLWDAATVPHPYSNNVAFVLEYTTKLLSSSFPNMTTTEVTQFVNGLYESRNDVGRFKDNIRDFLIQSKEFSAQDNKDLYAEEAAAQMERERQRMLSIPGLIAPSEIQDDMADS.

Residues 37–103 (ADNILRDLKA…KNYISDVIVQ (67 aa)) form the Importin N-terminal domain. HEAT repeat units follow at residues 135 to 171 (AKWK…EVFD), 232 to 267 (IFES…LNFG), 282 to 319 (MNQL…FFTS), 475 to 514 (DTEK…SMVV), 564 to 601 (KFLK…KCKR), 613 to 650 (PFVS…AESD), 683 to 720 (LKEP…IFLD), 757 to 794 (REIL…DYAR), 799 to 836 (ARES…CTLE), 895 to 935 (ETGL…VLTD), and 943 to 988 (KLHV…YTTK).

This sequence belongs to the exportin family. Present in mature pollen grains, unpollinated pistils, and 2-week-old seedlings.

Its subcellular location is the nucleus. It localises to the nuclear pore complex. It is found in the nucleus membrane. Functionally, receptor for the leucine-rich nuclear export signal (NES). Binds cooperatively to the NES on its target protein and to the small GTPase Ran in its active GTP-bound form. Required for the maternal-to-embryonic transition and during gametophyte development. This chain is Protein EXPORTIN 1B, found in Arabidopsis thaliana (Mouse-ear cress).